We begin with the raw amino-acid sequence, 256 residues long: NAD-dependent protein deacylase 4 (256 aa).

One can recognise a Deacetylase sirtuin-type domain in the interval 1 to 250 (MRLPAEALKD…AKIHESLSTG (250 aa)). 19–39 (GAGISAESGILTYLDQMPKLW) contacts NAD(+). Substrate contacts are provided by Tyr64 and Arg67. 98–101 (QNVD) contributes to the NAD(+) binding site. The Proton acceptor role is filled by His116. Residues Cys124, Cys127, Cys152, and Cys155 each coordinate Zn(2+). Residues 192-194 (GTS), 218-220 (NTV), and Ala236 contribute to the NAD(+) site.

Belongs to the sirtuin family. Class III subfamily. The cofactor is Zn(2+).

The protein resides in the cytoplasm. The catalysed reaction is N(6)-acetyl-L-lysyl-[protein] + NAD(+) + H2O = 2''-O-acetyl-ADP-D-ribose + nicotinamide + L-lysyl-[protein]. It carries out the reaction N(6)-succinyl-L-lysyl-[protein] + NAD(+) + H2O = 2''-O-succinyl-ADP-D-ribose + nicotinamide + L-lysyl-[protein]. Functionally, NAD-dependent lysine deacetylase and desuccinylase that specifically removes acetyl and succinyl groups on target proteins. Modulates the activities of several proteins which are inactive in their acylated form. The sequence is that of NAD-dependent protein deacylase 4 from Pseudomonas syringae pv. tomato (strain ATCC BAA-871 / DC3000).